Consider the following 456-residue polypeptide: tRNA modification GTPase MnmE (456 aa).

Residues arginine 24, glutamate 81, and lysine 120 each coordinate (6S)-5-formyl-5,6,7,8-tetrahydrofolate. The TrmE-type G domain maps to 216–379; sequence GMTVVIAGRP…LREHLKACMG (164 aa). K(+) is bound at residue asparagine 226. Residues 226–231, 245–251, 270–273, 335–338, and 359–361 contribute to the GTP site; these read NAGKSS, TEIAGTT, DTAG, NKAD, and SAR. Serine 230 lines the Mg(2+) pocket. K(+)-binding residues include threonine 245, isoleucine 247, and threonine 250. Residue threonine 251 participates in Mg(2+) binding. Lysine 456 lines the (6S)-5-formyl-5,6,7,8-tetrahydrofolate pocket.

Belongs to the TRAFAC class TrmE-Era-EngA-EngB-Septin-like GTPase superfamily. TrmE GTPase family. As to quaternary structure, homodimer. Heterotetramer of two MnmE and two MnmG subunits. K(+) is required as a cofactor.

Its subcellular location is the cytoplasm. Functionally, exhibits a very high intrinsic GTPase hydrolysis rate. Involved in the addition of a carboxymethylaminomethyl (cmnm) group at the wobble position (U34) of certain tRNAs, forming tRNA-cmnm(5)s(2)U34. The chain is tRNA modification GTPase MnmE from Pseudomonas syringae pv. syringae (strain B728a).